We begin with the raw amino-acid sequence, 999 residues long: Sarcoplasmic/endoplasmic reticulum calcium ATPase 3 (999 aa).

Residue methionine 1 is modified to N-acetylmethionine. At 1-48 (MEEAHLLSAADVLRRFSVTAEGGLSLEQVTDARERYGPNELPTEEGKS) the chain is on the cytoplasmic side. Serine 17 bears the Phosphoserine mark. A Phosphothreonine modification is found at threonine 19. Phosphoserine is present on serine 25. The helical transmembrane segment at 49–69 (LWELVVEQFEDLLVRILLLAA) threads the bilayer. Residues 70–89 (LVSFVLAWFEEGEETTTAFV) are Lumenal-facing. A helical membrane pass occupies residues 90–110 (EPLVIMLILVANAIVGVWQER). Residues 111 to 253 (NAESAIEALK…PERTPLQRKL (143 aa)) are Cytoplasmic-facing. Residues 254 to 273 (DEFGRQLSHAISVICVAVWV) traverse the membrane as a helical segment. The Lumenal segment spans residues 274–295 (INIGHFADPAHGGSWLRGAVYY). The chain crosses the membrane as a helical span at residues 296–313 (FKIAVALAVAAIPEGLPA). 4 residues coordinate Ca(2+): valine 304, alanine 305, isoleucine 307, and glutamate 309. Residues 314-757 (VITTCLALGT…EEGRAIYNNM (444 aa)) are Cytoplasmic-facing. The 4-aspartylphosphate intermediate role is filled by aspartate 351. Aspartate 351 and threonine 353 together coordinate Mg(2+). Threonine 353 serves as a coordination point for ATP. An interaction with phospholamban 1 region spans residues 370–400 (AEAEAGTCRLHEFTISGTTYTPEGEVRQGEQ). Phosphothreonine is present on threonine 415. The ATP site is built by glutamate 442, arginine 489, lysine 515, arginine 560, threonine 625, glycine 626, and aspartate 627. Serine 662 bears the Phosphoserine mark. Arginine 678 and lysine 684 together coordinate ATP. Aspartate 703 lines the Mg(2+) pocket. ATP is bound at residue asparagine 706. A helical transmembrane segment spans residues 758-777 (KQFIRYLISSNVGEVVCIFL). 2 residues coordinate Ca(2+): asparagine 768 and glutamate 771. Topologically, residues 778-787 (TAILGLPEAL) are lumenal. A helical membrane pass occupies residues 788 to 808 (IPVQLLWVNLVTDGLPATALG). The interval 788–808 (IPVQLLWVNLVTDGLPATALG) is interaction with phospholamban 2. The Ca(2+) site is built by asparagine 796, threonine 799, and aspartate 800. At 809-828 (FNPPDLDIMEKPPRNPREAL) the chain is on the cytoplasmic side. The chain crosses the membrane as a helical span at residues 829–851 (ISGWLFFRYLAIGVYVGLATVAA). Residues 852 to 897 (ATWWFLYDTEGPQVTFYQLRNFLKCSEDNPLFAGIDCKVFESRFPT) lie on the Lumenal side of the membrane. Residues 898-917 (TMALSVLVTIEMCNALNSVS) traverse the membrane as a helical segment. Glutamate 908 is a binding site for Ca(2+). At 918-930 (ENQSLLRMPPWLN) the chain is on the cytoplasmic side. Residues 931 to 949 (PWLLGAVVMSMALHFLILL) traverse the membrane as a helical segment. Residues 950-964 (VPPLPLIFQVTPLSG) lie on the Lumenal side of the membrane. The chain crosses the membrane as a helical span at residues 965–985 (RQWGVVLQMSLPVILLDEALK). Topologically, residues 986–999 (YLSRNHMDEKKDLK) are cytoplasmic.

Belongs to the cation transport ATPase (P-type) (TC 3.A.3) family. Type IIA subfamily. Interacts with sarcolipin (SLN). Interacts with phospholamban (PLN). Interacts with myoregulin (MRLN). Interacts with DWORF. Interacts with VMP1. Interacts with TUNAR; the interaction occurs at low levels in low glucose conditions and is increased by high glucose levels. Mg(2+) serves as cofactor.

It is found in the endoplasmic reticulum membrane. The protein localises to the sarcoplasmic reticulum membrane. It catalyses the reaction Ca(2+)(in) + ATP + H2O = Ca(2+)(out) + ADP + phosphate + H(+). Inhibited by sarcolipin (SLN), phospholamban (PLN) and myoregulin (MRLN). Enhanced by DWORF; DWORF increases activity by displacing sarcolipin (SLN), phospholamban (PLN) and myoregulin (MRLN). Its function is as follows. This magnesium-dependent enzyme catalyzes the hydrolysis of ATP coupled with the transport of calcium. Transports calcium ions from the cytosol into the sarcoplasmic/endoplasmic reticulum lumen. Contributes to calcium sequestration involved in muscular excitation/contraction. The chain is Sarcoplasmic/endoplasmic reticulum calcium ATPase 3 (Atp2a3) from Mus musculus (Mouse).